We begin with the raw amino-acid sequence, 358 residues long: Mesaconyl-CoA hydratase (358 aa).

It belongs to the enoyl-CoA hydratase/isomerase family. Homodimer.

It carries out the reaction (2R,3S)-beta-methylmalyl-CoA = 2-methylfumaryl-CoA + H2O. Shows highest activity at 0.5 M KCl. Does not require divalent ions for activity. Its function is as follows. Involved in the methylaspartate cycle. Catalyzes the reversible hydration of mesaconyl-CoA (2-methylfumaryl-CoA) to yield beta-methylmalyl-CoA ((2R,3S)-beta-methylmalyl-CoA). Also shows activity with mesaconyl-C4-CoA (3-methylfumaryl-CoA), (S)-citramalyl-CoA and (S)-malyl-CoA. The protein is Mesaconyl-CoA hydratase of Haloarcula hispanica (strain ATCC 33960 / DSM 4426 / JCM 8911 / NBRC 102182 / NCIMB 2187 / VKM B-1755).